A 46-amino-acid polypeptide reads, in one-letter code: uncharacterized protein (46 aa).

Residues 12–34 (HFNHFVIALSFIYGLTELGYLLL) traverse the membrane as a helical segment.

It is found in the cell membrane. This is an uncharacterized protein from Bacillus subtilis (strain 168).